The following is a 299-amino-acid chain: Coenzyme PQQ synthesis protein B (299 aa).

This sequence belongs to the PqqB family.

The protein operates within cofactor biosynthesis; pyrroloquinoline quinone biosynthesis. Its function is as follows. May be involved in the transport of PQQ or its precursor to the periplasm. In Methylorubrum populi (strain ATCC BAA-705 / NCIMB 13946 / BJ001) (Methylobacterium populi), this protein is Coenzyme PQQ synthesis protein B.